The primary structure comprises 181 residues: UPF0301 protein COXBURSA331_A2219 (181 aa).

Belongs to the UPF0301 (AlgH) family.

The chain is UPF0301 protein COXBURSA331_A2219 from Coxiella burnetii (strain RSA 331 / Henzerling II).